Here is a 500-residue protein sequence, read N- to C-terminus: MAIKANEISSLIKKQIENFTPDFEVAETGVVTYVGDGIARAYGLENAMSGELVEFSNGVLGMAQNLDATDVGIIVLGDFLSIREGDTVKRTGKIMEIQVGEELIGRVVNPLGQPVDGLGELNTGKTRPVEAKAPGVMQRKSVSEPLQTGLKAIDALVPIGRGQRELIIGDRQTGKTSVAIDAILNQKGQDMICIYVAIGQKESTVRTQVETLRKLDAMDYTIVVTASASQPSPLLYIAPYAGAAMGEEFMYNGKHVLVVYDDLSKQAVAYRELSLLLRRPPGREAYPGDVFYLHSRLLERAAKLSDDLGGGSMTALPFIETQAGDISAYIATNVISITDGQIFLENDLFYSGVRPAIDAGSSVSRVGGAAQIKAMKKVAGTLRLDLASFRELEAFTQFGSDLDEATQAKLNRGRRTVEVLKQPLHKPLAVEKQVLILYALTHGHLDDVPVDDVLDFETKMFDFFDANYADLLNVITDTKDLPEEAKLDEAIKAFKNTTNY.

Gly169 to Thr176 contacts ATP.

The protein belongs to the ATPase alpha/beta chains family. F-type ATPases have 2 components, CF(1) - the catalytic core - and CF(0) - the membrane proton channel. CF(1) has five subunits: alpha(3), beta(3), gamma(1), delta(1), epsilon(1). CF(0) has three main subunits: a(1), b(2) and c(9-12). The alpha and beta chains form an alternating ring which encloses part of the gamma chain. CF(1) is attached to CF(0) by a central stalk formed by the gamma and epsilon chains, while a peripheral stalk is formed by the delta and b chains.

Its subcellular location is the cell membrane. The catalysed reaction is ATP + H2O + 4 H(+)(in) = ADP + phosphate + 5 H(+)(out). Produces ATP from ADP in the presence of a proton gradient across the membrane. The alpha chain is a regulatory subunit. The polypeptide is ATP synthase subunit alpha (Lactococcus lactis subsp. cremoris (strain SK11)).